Consider the following 350-residue polypeptide: tRNA uridine(34) hydroxylase (350 aa).

The 95-residue stretch at 146–240 folds into the Rhodanese domain; the sequence is DDPDAVFIDM…YARRAREQGL (95 aa). Residue Cys-200 is the Cysteine persulfide intermediate of the active site. Positions 319–328 are enriched in basic and acidic residues; that stretch reads RRRRAGRENG. Residues 319–350 form a disordered region; that stretch reads RRRRAGRENGNKIFNKSRGRLNSKLSIPDPAE.

This sequence belongs to the TrhO family.

It carries out the reaction uridine(34) in tRNA + AH2 + O2 = 5-hydroxyuridine(34) in tRNA + A + H2O. Its function is as follows. Catalyzes oxygen-dependent 5-hydroxyuridine (ho5U) modification at position 34 in tRNAs. This chain is tRNA uridine(34) hydroxylase, found in Salmonella gallinarum (strain 287/91 / NCTC 13346).